Reading from the N-terminus, the 113-residue chain is Large ribosomal subunit protein bL17 (113 aa).

This sequence belongs to the bacterial ribosomal protein bL17 family. As to quaternary structure, part of the 50S ribosomal subunit. Contacts protein L32.

In Natranaerobius thermophilus (strain ATCC BAA-1301 / DSM 18059 / JW/NM-WN-LF), this protein is Large ribosomal subunit protein bL17.